Here is a 170-residue protein sequence, read N- to C-terminus: Urease accessory protein UreE (170 aa).

The tract at residues 137-170 (PFDPESGAYAHAGREQSHAHSHEHSHADGHTHAH) is disordered. The span at 148 to 170 (AGREQSHAHSHEHSHADGHTHAH) shows a compositional bias: basic and acidic residues.

Belongs to the UreE family.

The protein resides in the cytoplasm. Functionally, involved in urease metallocenter assembly. Binds nickel. Probably functions as a nickel donor during metallocenter assembly. The chain is Urease accessory protein UreE from Pseudoalteromonas translucida (strain TAC 125).